The primary structure comprises 376 residues: MYG1 exonuclease (376 aa).

Residues 1–47 (MGHRFLRGLLTLLLPPPPLYTRHRMLGPESVPPPKRSRSKLMAPPRI) constitute a mitochondrion transit peptide. At serine 120 the chain carries Phosphoserine. N6-acetyllysine is present on residues lysine 267 and lysine 273.

This sequence belongs to the MYG1 family. Ubiquitously expressed, with highest levels in testis.

Its subcellular location is the nucleus. The protein resides in the nucleoplasm. It is found in the mitochondrion matrix. It localises to the nucleolus. Functionally, 3'-5' RNA exonuclease which cleaves in situ on specific transcripts in both nucleus and mitochondrion. Involved in regulating spatially segregated organellar RNA processing, acts as a coordinator of nucleo-mitochondrial crosstalk. In nucleolus, processes pre-ribosomal RNA involved in ribosome assembly and alters cytoplasmic translation. In mitochondrial matrix, processes 3'-termini of the mito-ribosomal and messenger RNAs and controls translation of mitochondrial proteins. This is MYG1 exonuclease from Homo sapiens (Human).